Here is a 173-residue protein sequence, read N- to C-terminus: Disulfide bond formation protein B (173 aa).

Topologically, residues 1–11 (MNALQWSFRAQ) are cytoplasmic. Residues 12-28 (CLTGFLFCTGLLAYAIF) traverse the membrane as a helical segment. The Periplasmic portion of the chain corresponds to 29–46 (LQLHQGLEPCPLCIFQRI). Cys38 and Cys41 are disulfide-bonded. Residues 47 to 63 (AFAVLGILFLIAGLYNS) form a helical membrane-spanning segment. Topologically, residues 64–70 (SNVYTRK) are cytoplasmic. The chain crosses the membrane as a helical span at residues 71–88 (AYGLLIFLTAAIGTGIAG). The Periplasmic segment spans residues 89 to 145 (RHVWVQLMPHNTISSCGSPLSFLSETMGPFEVFRTVLTGTSDCGNIDWRFLGLSMPM). A disulfide bridge links Cys104 with Cys131. A helical membrane pass occupies residues 146 to 164 (WSMFWFVALALLGLLVGFK). Residues 165-173 (AERRKPLFS) are Cytoplasmic-facing.

The protein belongs to the DsbB family.

Its subcellular location is the cell inner membrane. In terms of biological role, required for disulfide bond formation in some periplasmic proteins. Acts by oxidizing the DsbA protein. This Xylella fastidiosa (strain 9a5c) protein is Disulfide bond formation protein B.